The chain runs to 352 residues: Nicotinate-nucleotide--dimethylbenzimidazole phosphoribosyltransferase (352 aa).

E316 functions as the Proton acceptor in the catalytic mechanism.

This sequence belongs to the CobT family.

The enzyme catalyses 5,6-dimethylbenzimidazole + nicotinate beta-D-ribonucleotide = alpha-ribazole 5'-phosphate + nicotinate + H(+). It functions in the pathway nucleoside biosynthesis; alpha-ribazole biosynthesis; alpha-ribazole from 5,6-dimethylbenzimidazole: step 1/2. In terms of biological role, catalyzes the synthesis of alpha-ribazole-5'-phosphate from nicotinate mononucleotide (NAMN) and 5,6-dimethylbenzimidazole (DMB). The sequence is that of Nicotinate-nucleotide--dimethylbenzimidazole phosphoribosyltransferase from Clostridium acetobutylicum (strain ATCC 824 / DSM 792 / JCM 1419 / IAM 19013 / LMG 5710 / NBRC 13948 / NRRL B-527 / VKM B-1787 / 2291 / W).